Consider the following 475-residue polypeptide: Aspartyl/glutamyl-tRNA(Asn/Gln) amidotransferase subunit B (475 aa).

The protein belongs to the GatB/GatE family. GatB subfamily. Heterotrimer of A, B and C subunits.

The catalysed reaction is L-glutamyl-tRNA(Gln) + L-glutamine + ATP + H2O = L-glutaminyl-tRNA(Gln) + L-glutamate + ADP + phosphate + H(+). The enzyme catalyses L-aspartyl-tRNA(Asn) + L-glutamine + ATP + H2O = L-asparaginyl-tRNA(Asn) + L-glutamate + ADP + phosphate + 2 H(+). In terms of biological role, allows the formation of correctly charged Asn-tRNA(Asn) or Gln-tRNA(Gln) through the transamidation of misacylated Asp-tRNA(Asn) or Glu-tRNA(Gln) in organisms which lack either or both of asparaginyl-tRNA or glutaminyl-tRNA synthetases. The reaction takes place in the presence of glutamine and ATP through an activated phospho-Asp-tRNA(Asn) or phospho-Glu-tRNA(Gln). The chain is Aspartyl/glutamyl-tRNA(Asn/Gln) amidotransferase subunit B from Chlorobium limicola (strain DSM 245 / NBRC 103803 / 6330).